Here is a 280-residue protein sequence, read N- to C-terminus: Urease accessory protein UreD (280 aa).

It belongs to the UreD family. In terms of assembly, ureD, UreF and UreG form a complex that acts as a GTP-hydrolysis-dependent molecular chaperone, activating the urease apoprotein by helping to assemble the nickel containing metallocenter of UreC. The UreE protein probably delivers the nickel.

It localises to the cytoplasm. Its function is as follows. Required for maturation of urease via the functional incorporation of the urease nickel metallocenter. The sequence is that of Urease accessory protein UreD from Mesorhizobium japonicum (strain LMG 29417 / CECT 9101 / MAFF 303099) (Mesorhizobium loti (strain MAFF 303099)).